Here is a 241-residue protein sequence, read N- to C-terminus: Non-structural protein 1 (241 aa).

Its subcellular location is the host cytoplasm. It is found in the host nucleus. In terms of biological role, suppresses the RNA silencing-based antiviral response in Drosophila cells. The protein is Non-structural protein 1 (NS) of Influenza C virus (strain C/Mississippi/1980).